Reading from the N-terminus, the 172-residue chain is Adenine phosphoribosyltransferase (172 aa).

Belongs to the purine/pyrimidine phosphoribosyltransferase family. Homodimer.

It is found in the cytoplasm. The catalysed reaction is AMP + diphosphate = 5-phospho-alpha-D-ribose 1-diphosphate + adenine. Its pathway is purine metabolism; AMP biosynthesis via salvage pathway; AMP from adenine: step 1/1. Functionally, catalyzes a salvage reaction resulting in the formation of AMP, that is energically less costly than de novo synthesis. The chain is Adenine phosphoribosyltransferase from Methanococcus maripaludis (strain C5 / ATCC BAA-1333).